A 509-amino-acid polypeptide reads, in one-letter code: GMP synthase [glutamine-hydrolyzing] (509 aa).

Positions 4 to 193 constitute a Glutamine amidotransferase type-1 domain; sequence NVLILDFGSQ…LIKIAGTKAT (190 aa). Cys-79 (nucleophile) is an active-site residue. Active-site residues include His-167 and Glu-169. Residues 194–384 enclose the GMPS ATP-PPase domain; that stretch reads WTPGKFVDLT…LGIDKELLGR (191 aa). Residue 221–227 coordinates ATP; that stretch reads SGGVDST.

In terms of assembly, homodimer.

The enzyme catalyses XMP + L-glutamine + ATP + H2O = GMP + L-glutamate + AMP + diphosphate + 2 H(+). It functions in the pathway purine metabolism; GMP biosynthesis; GMP from XMP (L-Gln route): step 1/1. Its function is as follows. Catalyzes the synthesis of GMP from XMP. In Christiangramia forsetii (strain DSM 17595 / CGMCC 1.15422 / KT0803) (Gramella forsetii), this protein is GMP synthase [glutamine-hydrolyzing].